A 670-amino-acid polypeptide reads, in one-letter code: MAETKIIYHMDEEETPYLVKLPVAPERVTLADFKNVLSNRPVHAYKFFFKSMDQDFGVVKEEIFDDNAKLPCFNGRVVSWLVLAEGAHSDAGSQGTDSHTDLPPPLERTGGIGDSRPPSFHPNVASSRDGMDNETGTESMVSHRRERARRRNREEAARTNGHPRGDRRRDVGLPPDSASTALSSELESSSFVDSDEDGSTSRLSSSTEQSTSSRLIRKHKRRRRKQRLRQADRASSFSSITDSTMSLNIVTVTLNMERHHFLGISIVGQSNDRGDGGIYIGSIMKGGAVAADGRIEPGDMLLQVNDVNFENMSNDDAVRVLREIVSQTGPISLTVAKCWDPTPRSYFTVPRADPVRPIDPAAWLSHTAALTGALPRYELEEAPLTVKSDMSAVVRVMQLPDSGLEIRDRMWLKITIANAVIGADVVDWLYTHVEGFKERREARKYASSLLKHGFLRHTVNKITFSEQCYYVFGDLCSNLATLNLNSGSSGASDQDTLAPLPHPAAPWPLGQGYPYQYPGPPPCFPPAYQDPGFSYGSGSTGSQQSEGSKSSGSTRSSRRAPGREKERRAAGAGGSGSESDHTAPSGVGSSWRERPAGQLSRGSSPRSQASATAPGLPPPHPTTKAYTVVGGPPGGPPVRELAAVPPELTGSRQSFQKAMGNPCEFFVDIM.

The 85-residue stretch at methionine 1 to glutamate 85 folds into the DIX domain. The interval serine 89–phenylalanine 237 is disordered. The segment covering serine 142–arginine 151 has biased composition (basic residues). A compositionally biased stretch (basic and acidic residues) spans asparagine 152–valine 171. The span at aspartate 176 to valine 192 shows a compositional bias: low complexity. Phosphoserine is present on serine 194. Low complexity predominate over residues threonine 200–arginine 214. Residues leucine 215–leucine 228 are compositionally biased toward basic residues. A PDZ domain is found at threonine 251 to glutamate 323. Residues proline 400 to aspartate 474 enclose the DEP domain. The segment at proline 518–alanine 642 is disordered. Low complexity predominate over residues proline 526 to arginine 555. Residues serine 600–alanine 611 are compositionally biased toward polar residues.

It belongs to the DSH family. As to quaternary structure, interacts with CXXC4. Interacts (via PDZ domain) with NXN. Interacts with BRD7 and INVS. Interacts (via PDZ domain) with VANGL1 and VANGL2 (via C-terminus). Interacts with ARRB1; the interaction is enhanced by phosphorylation of DVL1. Interacts with CYLD. Interacts (via PDZ domain) with RYK. Self-associates (via DIX domain) and forms higher homooligomers. Interacts (via PDZ domain) with DACT1 and FZD7, where DACT1 and FZD7 compete for the same binding site. Interacts (via DEP domain) with MUSK; the interaction is direct and mediates the formation a DVL1, MUSK and PAK1 ternary complex involved in AChR clustering. Interacts (via PDZ domain) with TMEM88. Interacts with DCDC2. Interacts with FOXK2. Interacts with PKD1 (via extracellular domain). Interacts (via PDZ domain) with CCDC88C/DAPLE; competes with CCDC88C for binding to frizzled receptor FZD7 and dissociates from CCDC88C following initiation of non-canonical Wnt signaling when CCDC88C displaces DVL1 from ligand-activated FZD7. Ubiquitinated; undergoes both 'Lys-48'-linked ubiquitination, leading to its subsequent degradation by the ubiquitin-proteasome pathway, and 'Lys-63'-linked ubiquitination. The interaction with INVS is required for ubiquitination. Deubiquitinated by CYLD, which acts on 'Lys-63'-linked ubiquitin chains.

It is found in the cell membrane. Its subcellular location is the cytoplasm. The protein resides in the cytosol. It localises to the cytoplasmic vesicle. Participates in Wnt signaling by binding to the cytoplasmic C-terminus of frizzled family members and transducing the Wnt signal to down-stream effectors. Plays a role both in canonical and non-canonical Wnt signaling. Plays a role in the signal transduction pathways mediated by multiple Wnt genes. Required for LEF1 activation upon WNT1 and WNT3A signaling. DVL1 and PAK1 form a ternary complex with MUSK which is important for MUSK-dependent regulation of AChR clustering during the formation of the neuromuscular junction (NMJ). The sequence is that of Segment polarity protein dishevelled homolog DVL-1 (DVL1) from Pan troglodytes (Chimpanzee).